Reading from the N-terminus, the 1964-residue chain is Probable helicase with zinc finger domain (1964 aa).

The segment at 178 to 206 (SEEYTLCKRFLEQGICRYGAQCTSAHSQE) adopts a C3H1-type zinc-finger fold. S248 carries the phosphoserine modification. An ATP-binding site is contributed by 668-675 (GPYGTGKT). The short motif at 794–797 (DEAA) is the DEAA box element. Positions 1116–1127 (HSGNSSRQQQSP) are enriched in polar residues. The segment at 1116–1135 (HSGNSSRQQQSPPKVKSLYH) is disordered. Position 1163 is a phosphothreonine (T1163). An Omega-N-methylarginine modification is found at R1245. 6 disordered regions span residues 1248–1350 (PIPY…LPAP), 1360–1379 (HFHPLPQLPRPPFPASQPHT), 1388–1449 (LPEQ…QAGP), 1463–1491 (QSPAAEAVGPEQPPPPGLPDGHSPLRAIT), 1631–1655 (QVQPRSPPAVPSPPSSTDHSSQFAN), and 1743–1964 (QHAA…SYFK). Composition is skewed to basic and acidic residues over residues 1268 to 1281 (HAEKDQQEQNRNGK) and 1292 to 1308 (NKIRTPEKKPTEPKQVD). Residues 1365–1374 (PQLPRPPFPA) show a composition bias toward pro residues. The segment covering 1388-1431 (LPEQPNQMAPQPNQVAPQPNQMTPQPNQVAPQPNQVVQQQSQAP) has biased composition (low complexity). A compositionally biased stretch (pro residues) spans 1635-1644 (RSPPAVPSPP). S1636, S1760, S1763, and S1788 each carry phosphoserine. Residues 1755 to 1765 (SSRTVSASSLP) are compositionally biased toward polar residues. Polar residues-rich tracts occupy residues 1799 to 1813 (PQDSLAQGKESQGHS) and 1826 to 1849 (WANTTSSAPYQNIPCNGSSRTSQP). Residues 1860–1870 (KPPEDQLKPES) show a composition bias toward basic and acidic residues. Polar residues-rich tracts occupy residues 1872–1881 (EVSSSFNYSM) and 1897–1910 (IAESANCSSQQSPA). The span at 1941 to 1956 (PLSLLQELSLGSSPGS) shows a compositional bias: low complexity.

This sequence belongs to the DNA2/NAM7 helicase family. In terms of assembly, interacts with POLR2A. Interacts with SMYD3; the interaction may bridge SMYD3 and RNA polymerase II. Interacts with SMYD2.

The protein localises to the nucleus. In terms of biological role, may act as a helicase that plays a role in RNA metabolism in multiple tissues and organs within the developing embryo. The polypeptide is Probable helicase with zinc finger domain (Helz) (Mus musculus (Mouse)).